Here is a 159-residue protein sequence, read N- to C-terminus: MNITVISVGKLKEKYLKQGIAEYDKRLSRYCKLNFIEVADEKAPENLSEAEEIMIKDKEGEAILKSIKDGMFVIALDLAGKMLSSEALSEKIDKLALQGNSHITFVIGGSLGLSQGVLKRADFKLCFSPMTFPHQLMKLILLEQVYRAFRISKNEPYHK.

S-adenosyl-L-methionine contacts are provided by residues Leu-76, Gly-108, and 127–132 (FSPMTF).

The protein belongs to the RNA methyltransferase RlmH family. As to quaternary structure, homodimer.

The protein resides in the cytoplasm. It catalyses the reaction pseudouridine(1915) in 23S rRNA + S-adenosyl-L-methionine = N(3)-methylpseudouridine(1915) in 23S rRNA + S-adenosyl-L-homocysteine + H(+). In terms of biological role, specifically methylates the pseudouridine at position 1915 (m3Psi1915) in 23S rRNA. The protein is Ribosomal RNA large subunit methyltransferase H of Alkaliphilus metalliredigens (strain QYMF).